The following is a 160-amino-acid chain: NADH-quinone oxidoreductase subunit I (160 aa).

4Fe-4S ferredoxin-type domains lie at 51 to 80 (RRYK…IEAA) and 91 to 120 (TKYD…EGPN). Cys60, Cys63, Cys66, Cys70, Cys100, Cys103, Cys106, and Cys110 together coordinate [4Fe-4S] cluster.

The protein belongs to the complex I 23 kDa subunit family. As to quaternary structure, NDH-1 is composed of 14 different subunits. Subunits NuoA, H, J, K, L, M, N constitute the membrane sector of the complex. Requires [4Fe-4S] cluster as cofactor.

It is found in the cell inner membrane. It carries out the reaction a quinone + NADH + 5 H(+)(in) = a quinol + NAD(+) + 4 H(+)(out). NDH-1 shuttles electrons from NADH, via FMN and iron-sulfur (Fe-S) centers, to quinones in the respiratory chain. The immediate electron acceptor for the enzyme in this species is believed to be ubiquinone. Couples the redox reaction to proton translocation (for every two electrons transferred, four hydrogen ions are translocated across the cytoplasmic membrane), and thus conserves the redox energy in a proton gradient. The protein is NADH-quinone oxidoreductase subunit I of Neorickettsia sennetsu (strain ATCC VR-367 / Miyayama) (Ehrlichia sennetsu).